A 452-amino-acid polypeptide reads, in one-letter code: UDP-N-acetylmuramoylalanine--D-glutamate ligase (452 aa).

Residue Gly-119–Thr-125 coordinates ATP.

Belongs to the MurCDEF family.

Its subcellular location is the cytoplasm. It carries out the reaction UDP-N-acetyl-alpha-D-muramoyl-L-alanine + D-glutamate + ATP = UDP-N-acetyl-alpha-D-muramoyl-L-alanyl-D-glutamate + ADP + phosphate + H(+). Its pathway is cell wall biogenesis; peptidoglycan biosynthesis. Its function is as follows. Cell wall formation. Catalyzes the addition of glutamate to the nucleotide precursor UDP-N-acetylmuramoyl-L-alanine (UMA). The chain is UDP-N-acetylmuramoylalanine--D-glutamate ligase from Streptococcus pyogenes serotype M28 (strain MGAS6180).